The chain runs to 544 residues: MVAKNIKYNEEARKKIQKGVKTLAEAVKVTLGPKGRHVVIDKSFGSPQVTKDGVTVAKEVELADKHENMGAQMVKEVASKTADKAGDGTTTATVLAEAIYTEGLRNVTAGANPMDLKRGIDKAVKVVVDQIKKISKPVQHHKEIAQVATISANNDAEIGNLIAEAMEKVGKNGSITVEEAKGFETVLDVVEGMNFNRGYLSSYFATNPETQECVLEDALVLIYDKKISGIKDFLPILQQVAESGRPLLIIAEDIEGEALATLVVNRIRGGFRVCAVKAPGFGDRRKAMLEDIAILTGGQLISEELGMKLENANLAMLGKAKKVIVSKEDTTIVEGMGEKEALEARCESIKKQIEDSSSDYDKEKLQERLAKLSGGVAVIRVGAATEIEMKEKKDRVDDAQHATIAAVEEGILPGGGTALIRCIPTLEAFLPMLTNEDEQIGARIVLKALSAPLKQIAANAGKEGAIIFQQVMSRSANEGYDALRDAYTDMLEAGILDPAKVTRSALESAASVAGLLLTTEALIAEIPEEKPAAAPAMPGAGMDY.

ATP is bound by residues 30-33 (TLGP), Lys-51, 87-91 (DGTTT), Gly-415, 481-483 (DAL), and Asp-497.

Belongs to the chaperonin (HSP60) family. In terms of assembly, forms a cylinder of 14 subunits composed of two heptameric rings stacked back-to-back. Interacts with the co-chaperonin GroES.

It localises to the cytoplasm. It catalyses the reaction ATP + H2O + a folded polypeptide = ADP + phosphate + an unfolded polypeptide.. Functionally, together with its co-chaperonin GroES, plays an essential role in assisting protein folding. The GroEL-GroES system forms a nano-cage that allows encapsulation of the non-native substrate proteins and provides a physical environment optimized to promote and accelerate protein folding. The sequence is that of Chaperonin GroEL from Chlamydia trachomatis serovar A (strain ATCC VR-571B / DSM 19440 / HAR-13).